The primary structure comprises 251 residues: CDP-diacylglycerol pyrophosphatase (251 aa).

The chain crosses the membrane as a helical span at residues Ala-4–Trp-24.

This sequence belongs to the Cdh family.

It localises to the cell inner membrane. The catalysed reaction is a CDP-1,2-diacyl-sn-glycerol + H2O = a 1,2-diacyl-sn-glycero-3-phosphate + CMP + 2 H(+). It functions in the pathway phospholipid metabolism; CDP-diacylglycerol degradation; phosphatidate from CDP-diacylglycerol: step 1/1. This chain is CDP-diacylglycerol pyrophosphatase, found in Escherichia coli O9:H4 (strain HS).